The primary structure comprises 252 residues: 1-(5-phosphoribosyl)-5-[(5-phosphoribosylamino)methylideneamino] imidazole-4-carboxamide isomerase (252 aa).

Asp-8 acts as the Proton acceptor in catalysis. Asp-129 serves as the catalytic Proton donor.

Belongs to the HisA/HisF family.

The protein localises to the cytoplasm. The enzyme catalyses 1-(5-phospho-beta-D-ribosyl)-5-[(5-phospho-beta-D-ribosylamino)methylideneamino]imidazole-4-carboxamide = 5-[(5-phospho-1-deoxy-D-ribulos-1-ylimino)methylamino]-1-(5-phospho-beta-D-ribosyl)imidazole-4-carboxamide. Its pathway is amino-acid biosynthesis; L-histidine biosynthesis; L-histidine from 5-phospho-alpha-D-ribose 1-diphosphate: step 4/9. The chain is 1-(5-phosphoribosyl)-5-[(5-phosphoribosylamino)methylideneamino] imidazole-4-carboxamide isomerase from Synechococcus sp. (strain RCC307).